We begin with the raw amino-acid sequence, 310 residues long: HTH-type transcriptional regulator PunR (310 aa).

The 58-residue stretch at 2–59 (WSEYSLEVVDAVARNGSFSAAAQELHRVPSAVSYTVRQLEEWLAVPLFERRHRDVELT) folds into the HTH lysR-type domain. The H-T-H motif DNA-binding region spans 19–38 (FSAAAQELHRVPSAVSYTVR).

This sequence belongs to the LysR transcriptional regulatory family.

It is found in the cytoplasm. Functionally, transcriptional regulator that activates the expression of punC, which encodes a purine nucleoside transporter. The chain is HTH-type transcriptional regulator PunR from Escherichia coli O157:H7.